The following is a 99-amino-acid chain: Cobalt transport protein CbiN (99 aa).

Transmembrane regions (helical) follow at residues 6-26 (VLMI…YSGL) and 68-88 (SLLF…FFGY).

This sequence belongs to the CbiN family. As to quaternary structure, forms an energy-coupling factor (ECF) transporter complex composed of an ATP-binding protein (A component, CbiO), a transmembrane protein (T component, CbiQ) and 2 possible substrate-capture proteins (S components, CbiM and CbiN) of unknown stoichimetry.

Its subcellular location is the cell membrane. It functions in the pathway cofactor biosynthesis; adenosylcobalamin biosynthesis. In terms of biological role, part of the energy-coupling factor (ECF) transporter complex CbiMNOQ involved in cobalt import. The chain is Cobalt transport protein CbiN from Methanococcus vannielii (strain ATCC 35089 / DSM 1224 / JCM 13029 / OCM 148 / SB).